Here is a 267-residue protein sequence, read N- to C-terminus: MAAGEPGDLGVYSFRFLPQKTFQSLSTPQTTSRLRQWSMLGRIEAQAFGFDQTFQAYRKDDFVTAFFKDPNVIPNLKLLSESSGEWLTLGTEVKKIEAINVPCTQLSMSFFNRLYDEAIVRDNGYIVKCLDSFCDPFLISDELRKVLLVEDSEKYEVFSQPEREEFLFCLFKHLCLGGALCQYEDVINPYLETTKLIYKDLVSVRKNPQTKKIQITSSIFKVTAYDSVGVCYPSTKSHEQTFSYFIVDPIKRHVHVLYHCYGMGEVS.

It belongs to the CFAP300 family. As to quaternary structure, interacts with DNAAF2.

It localises to the cytoplasm. The protein localises to the cytoskeleton. The protein resides in the cilium axoneme. Functionally, cilium- and flagellum-specific protein that plays a role in axonemal structure organization and motility. May play a role in outer and inner dynein arm assembly. This chain is Cilia- and flagella-associated protein 300, found in Bos taurus (Bovine).